Reading from the N-terminus, the 354-residue chain is CX3C chemokine receptor 1 (354 aa).

The Extracellular portion of the chain corresponds to 1 to 32 (MSTSFPELDLENFEYDDSAEACYLGDIVAFGT). Residues 33–60 (IFLSVFYALVFTFGLVGNLLVVLALTNS) form a helical membrane-spanning segment. The Cytoplasmic portion of the chain corresponds to 61-70 (RKPKSITDIY). The helical transmembrane segment at 71 to 91 (LLNLALSDLLFVATLPFWTHY) threads the bilayer. At 92–104 (LISHEGLHNAMCK) the chain is on the extracellular side. A disulfide bond links Cys-103 and Cys-176. Residues 105 to 126 (LTTAFFFIGFFGGIFFITVISI) traverse the membrane as a helical segment. Residues 127–143 (DRYLAIVLAANSMNNRT) are Cytoplasmic-facing. Residues 144 to 168 (VQHGVTISLGVWAAAILVASPQFMF) form a helical membrane-spanning segment. Residues 169–196 (TKRKDNECLGDYPEVLQEMWPVLRNSEV) lie on the Extracellular side of the membrane. Residues 197-216 (NILGFALPLLIMSFCYFRII) traverse the membrane as a helical segment. Residues 217 to 232 (QTLFSCKNRKKARAVR) lie on the Cytoplasmic side of the membrane. Residues 233–257 (LILLVVFAFFLFWTPYNIMIFLETL) traverse the membrane as a helical segment. Topologically, residues 258 to 274 (KFYNFFPSCDMKRDLRL) are extracellular. A helical membrane pass occupies residues 275–298 (ALSVTETVAFSHCCLNPFIYAFAG). The Cytoplasmic segment spans residues 299-354 (EKFRRYLGHLYRKCLAVLCGHPVHTGFSPESQRSRQDSILSSFTHYTSEGDGSLLL). Thr-345 is modified (phosphothreonine).

This sequence belongs to the G-protein coupled receptor 1 family. Found in a ternary complex with CX3CL1 and ITGAV:ITGB3 or ITGA4:ITGB1. This protein is not N-glycosylated which is unusual for G-protein-coupled receptors. As to expression, specifically expressed in subsets of leukocytes: expressed in monocytes, subsets of T-cells and natural killer (NK) cells in the circulation, dendritic cells, as well as in microglia in the central nervous system (CNS). Expression level subdivides blood monocytes into two major functional subsets; CD14(+)CD16(-)-CX3CR1(low) inflammatory monocytes and CD14(low)CD16(+)CX3CR1(high) homeostatic monocytes. Expressed in myeloid-derived mucosal dendritic cells, which populate the entire lamina propria of the small intestine.

It is found in the cell membrane. In terms of biological role, receptor for the C-X3-C chemokine fractalkine (CX3CL1) present on many early leukocyte cells; CX3CR1-CX3CL1 signaling exerts distinct functions in different tissue compartments, such as immune response, inflammation, cell adhesion and chemotaxis. CX3CR1-CX3CL1 signaling mediates cell migratory functions. Responsible for the recruitment of natural killer (NK) cells to inflamed tissues. Acts as a regulator of inflammation process leading to atherogenesis by mediating macrophage and monocyte recruitment to inflamed atherosclerotic plaques, promoting cell survival. Involved in airway inflammation by promoting interleukin 2-producing T helper (Th2) cell survival in inflamed lung. Involved in the migration of circulating monocytes to non-inflamed tissues, where they differentiate into macrophages and dendritic cells. Acts as a negative regulator of angiogenesis, probably by promoting macrophage chemotaxis. Plays a key role in brain microglia by regulating inflammatory response in the central nervous system (CNS) and regulating synapse maturation. Required to restrain the microglial inflammatory response in the CNS and the resulting parenchymal damage in response to pathological stimuli. Involved in brain development by participating in synaptic pruning, a natural process during which brain microglia eliminates extra synapses during postnatal development. Synaptic pruning by microglia is required to promote the maturation of circuit connectivity during brain development. Acts as an important regulator of the gut microbiota by controlling immunity to intestinal bacteria and fungi. Expressed in lamina propria dendritic cells in the small intestine, which form transepithelial dendrites capable of taking up bacteria in order to provide defense against pathogenic bacteria. Required to initiate innate and adaptive immune responses against dissemination of commensal fungi (mycobiota) component of the gut: expressed in mononuclear phagocytes (MNPs) and acts by promoting induction of antifungal IgG antibodies response to confer protection against disseminated C.albicans or C.auris infection. Also acts as a receptor for C-C motif chemokine CCL26, inducing cell chemotaxis. This chain is CX3C chemokine receptor 1, found in Mus musculus (Mouse).